The chain runs to 515 residues: DNA-directed RNA polymerase subunit Rpo2N (515 aa).

The protein belongs to the RNA polymerase beta chain family. Part of the RNA polymerase complex.

Its subcellular location is the cytoplasm. It catalyses the reaction RNA(n) + a ribonucleoside 5'-triphosphate = RNA(n+1) + diphosphate. Its function is as follows. DNA-dependent RNA polymerase (RNAP) catalyzes the transcription of DNA into RNA using the four ribonucleoside triphosphates as substrates. The Rpo2 subunit (Rpo2N and Rpo2C in this organism) is implicated in DNA promoter recognition and in nucleotide binding. This chain is DNA-directed RNA polymerase subunit Rpo2N, found in Methanothermobacter thermautotrophicus (strain Winter) (Methanobacterium thermoautotrophicum).